Here is a 506-residue protein sequence, read N- to C-terminus: (+)-piperitol/(+)-sesamin synthase CYP81Q2 (506 aa).

Residues 3–23 (AEMLYSALALTFAIFMVYRIL) traverse the membrane as a helical segment. Cys439 contacts heme.

Belongs to the cytochrome P450 family. Requires heme as cofactor. As to expression, expressed in seeds.

It localises to the membrane. It catalyses the reaction (+)-piperitol + reduced [NADPH--hemoprotein reductase] + O2 = (+)-sesamin + oxidized [NADPH--hemoprotein reductase] + 2 H2O + H(+). It carries out the reaction (+)-pinoresinol + reduced [NADPH--hemoprotein reductase] + O2 = (+)-piperitol + oxidized [NADPH--hemoprotein reductase] + 2 H2O + H(+). Involved in the biosynthesis of (+)-sesamin, a furofuran class lignan. Functions in a dual catalytic mode. Catalyzes the synthesis of (+)-sesamin from (+)- pinoresinol by formation of two successive methylenedioxy bridges on (+)-pinoresinol and (+)-piperitol, respectively. This chain is (+)-piperitol/(+)-sesamin synthase CYP81Q2, found in Sesamum radiatum (Black benniseed).